The chain runs to 247 residues: MATNGEEQQSQAGRHQEVGHKSLLQSDALYQYILETSVYPREPECMKELREVTAKHPWNIMTTSADEGQFLNMLLKLVNAKNTMEIGVYTGYSLLATALAIPEDGKILAMDINRENYELGLPVIQKAGVAHKIDFKEGPALPVLDQMIEDGKCHGSFDFIFVDADKDNYINYHKRLIELVKVGGLIGYDNTLWNGSVVAPPDAPMRKYVRYYRDFVLELNKALAADPRIEICMLPVGDGITLCRRIQ.

Lysine 21 serves as a coordination point for substrate. S-adenosyl-L-methionine-binding positions include threonine 63, glutamate 85, 87–88 (GV), serine 93, aspartate 111, and alanine 140. Aspartate 163 lines the substrate pocket. Position 163 (aspartate 163) interacts with a divalent metal cation. Aspartate 165 provides a ligand contact to S-adenosyl-L-methionine. Aspartate 189 and asparagine 190 together coordinate a divalent metal cation. Asparagine 194 is a substrate binding site.

It belongs to the class I-like SAM-binding methyltransferase superfamily. Cation-dependent O-methyltransferase family. CCoAMT subfamily. The cofactor is a divalent metal cation.

It catalyses the reaction (E)-caffeoyl-CoA + S-adenosyl-L-methionine = (E)-feruloyl-CoA + S-adenosyl-L-homocysteine + H(+). Its pathway is aromatic compound metabolism; phenylpropanoid biosynthesis. Its function is as follows. Methylates caffeoyl-CoA to feruloyl-CoA and 5-hydroxyferuloyl-CoA to sinapoyl-CoA. Plays a role in the synthesis of feruloylated polysaccharides. Involved in the reinforcement of the plant cell wall. Also involved in the responding to wounding or pathogen challenge by the increased formation of cell wall-bound ferulic acid polymers. This Populus trichocarpa (Western balsam poplar) protein is Caffeoyl-CoA O-methyltransferase 1 (CCOAOMT1).